Here is a 1452-residue protein sequence, read N- to C-terminus: Receptor-type tyrosine-protein phosphatase mu (1452 aa).

Positions 1–20 (MRGLGTCLATLAGLLLTAAG) are cleaved as a signal peptide. Over 21-742 (ETFSGGCLFD…PEKQTDHTVK (722 aa)) the chain is Extracellular. The region spanning 22-184 (TFSGGCLFDE…VKVLGHPCTR (163 aa)) is the MAM domain. Cysteines 27 and 36 form a disulfide. N72, N92, N131, and N249 each carry an N-linked (GlcNAc...) asparagine glycan. Intrachain disulfides connect C96–C182 and C206–C260. Residues 186-277 (PHFLRIQNVE…VGISNYAELV (92 aa)) enclose the Ig-like C2-type domain. Fibronectin type-III domains are found at residues 284–379 (PIAP…CADP), 382–480 (GPRK…TDED), 482–587 (PGAV…SAPS), and 589–671 (PAYE…DSLQ). N-linked (GlcNAc...) asparagine glycans are attached at residues N406, N414, N454, N534, N544, N598, N651, and N681. The helical transmembrane segment at 743 to 764 (IAGVIAGILLFVIIFLGVVLVM) threads the bilayer. Residues 765–1452 (KKRKLAKKRK…EVALEYLNSG (688 aa)) lie on the Cytoplasmic side of the membrane. S821 bears the Phosphoserine mark. 2 consecutive Tyrosine-protein phosphatase domains span residues 900–1154 (FKEE…ILEA) and 1186–1448 (IKEE…ALEY). Substrate-binding positions include D1063, 1095–1101 (CSAGAGR), and Q1139. C1095 (phosphocysteine intermediate) is an active-site residue. The active-site Phosphocysteine intermediate is C1389.

Belongs to the protein-tyrosine phosphatase family. Receptor class 2B subfamily. As to quaternary structure, homodimer.

The protein resides in the cell membrane. The enzyme catalyses O-phospho-L-tyrosyl-[protein] + H2O = L-tyrosyl-[protein] + phosphate. Receptor protein-tyrosine phosphatase that mediates homotypic cell-cell interactions and plays a role in adipogenic differentiation via modulation of p120 catenin/CTNND1 phosphorylation. Promotes CTNND1 dephosphorylation and prevents its cytoplasmic localization where it inhibits SLC2A4 membrane trafficking. In turn, SLC2A4 is directed to the plasma membrane and performs its glucose transporter function. The chain is Receptor-type tyrosine-protein phosphatase mu (PTPRM) from Homo sapiens (Human).